The chain runs to 178 residues: Probetacellulin (178 aa).

Residues 1–31 form the signal peptide; the sequence is MARAAPGSGASPLPLLPALALGLVILHCVVA. Residues 32–118 are Extracellular-facing; it reads DGNSTRSPED…LFYLRGDRGQ (87 aa). Residue N34 is glycosylated (N-linked (GlcNAc...) asparagine). One can recognise an EGF-like domain in the interval 65–105; the sequence is HFSRCPKQYKHYCIKGRCRFVVAEQTPSCVCDEGYAGARCE. Cystine bridges form between C69–C82, C77–C93, and C95–C104. The propeptide at 112 to 178 is removed in mature form; the sequence is LRGDRGQILV…NDDIQETSIA (67 aa). Residues 119 to 139 traverse the membrane as a helical segment; it reads ILVICLIAVMVIFIILVVSIC. Over 140–178 the chain is Cytoplasmic; sequence TCCHPLRKRRKRRKKEEEMETLGKDITPINDDIQETSIA.

In terms of assembly, monomer. Interacts with EGFR and ERBB4. In terms of tissue distribution, expressed in a wide range of tissues, including the mammary gland.

It localises to the secreted. It is found in the extracellular space. Its subcellular location is the cell membrane. In terms of biological role, growth factor that binds to EGFR, ERBB4 and other EGF receptor family members. Potent mitogen for retinal pigment epithelial cells and vascular smooth muscle cells. The chain is Probetacellulin (BTC) from Bos taurus (Bovine).